The chain runs to 130 residues: Ribosome-binding factor A (130 aa).

Positions 111–130 are disordered; that stretch reads RDLDDVGPEATSSDEDAEQR.

It belongs to the RbfA family. As to quaternary structure, monomer. Binds 30S ribosomal subunits, but not 50S ribosomal subunits or 70S ribosomes.

The protein resides in the cytoplasm. Functionally, one of several proteins that assist in the late maturation steps of the functional core of the 30S ribosomal subunit. Associates with free 30S ribosomal subunits (but not with 30S subunits that are part of 70S ribosomes or polysomes). Required for efficient processing of 16S rRNA. May interact with the 5'-terminal helix region of 16S rRNA. The polypeptide is Ribosome-binding factor A (Xanthomonas euvesicatoria pv. vesicatoria (strain 85-10) (Xanthomonas campestris pv. vesicatoria)).